Reading from the N-terminus, the 131-residue chain is Fumarate reductase subunit C (131 aa).

The next 3 membrane-spanning stretches (helical) occupy residues glutamate 30–leucine 50, tryptophan 57–leucine 77, and isoleucine 109–leucine 129.

Belongs to the FrdC family. As to quaternary structure, part of an enzyme complex containing four subunits: a flavoprotein (FrdA), an iron-sulfur protein (FrdB), and two hydrophobic anchor proteins (FrdC and FrdD).

Its subcellular location is the cell inner membrane. Its function is as follows. Two distinct, membrane-bound, FAD-containing enzymes are responsible for the catalysis of fumarate and succinate interconversion; fumarate reductase is used in anaerobic growth, and succinate dehydrogenase is used in aerobic growth. Anchors the catalytic components of the fumarate reductase complex to the cell inner membrane, binds quinones. This Salmonella choleraesuis (strain SC-B67) protein is Fumarate reductase subunit C.